The following is a 314-amino-acid chain: Mitochondrial thiamine pyrophosphate carrier 1 (314 aa).

Transmembrane regions (helical) follow at residues Val-14–Ala-30, Leu-84–Phe-100, Leu-116–Leu-136, Gly-170–Phe-186, Ser-217–Leu-233, and Gly-285–Trp-302. Solcar repeat units lie at residues Val-14 to Tyr-103, Glu-110 to Tyr-195, and Glu-210 to Tyr-310.

It belongs to the mitochondrial carrier (TC 2.A.29) family.

It localises to the mitochondrion inner membrane. Its function is as follows. Mitochondrial transporter that mediates uptake of thiamine pyrophosphate (ThPP) into mitochondria. The sequence is that of Mitochondrial thiamine pyrophosphate carrier 1 (TPC1) from Saccharomyces cerevisiae (strain ATCC 204508 / S288c) (Baker's yeast).